A 396-amino-acid chain; its full sequence is Elongation factor Tu 1 (396 aa).

The 197-residue stretch at 10–206 (KPHVNVGTIG…ALDTYIPTPK (197 aa)) folds into the tr-type G domain. Residues 19–26 (GHVDHGKT) are G1. 19-26 (GHVDHGKT) lines the GTP pocket. Mg(2+) is bound at residue Thr-26. A G2 region spans residues 60–64 (GITIS). The segment at 81 to 84 (DCPG) is G3. Residues 81 to 85 (DCPGH) and 136 to 139 (NKAD) each bind GTP. A G4 region spans residues 136–139 (NKAD). The interval 174–176 (SAL) is G5.

It belongs to the TRAFAC class translation factor GTPase superfamily. Classic translation factor GTPase family. EF-Tu/EF-1A subfamily. As to quaternary structure, monomer.

It is found in the cytoplasm. The catalysed reaction is GTP + H2O = GDP + phosphate + H(+). GTP hydrolase that promotes the GTP-dependent binding of aminoacyl-tRNA to the A-site of ribosomes during protein biosynthesis. This chain is Elongation factor Tu 1, found in Ruthia magnifica subsp. Calyptogena magnifica.